We begin with the raw amino-acid sequence, 349 residues long: ATPase GET3 (349 aa).

26–33 is a binding site for ATP; sequence KGGVGKTT. Residue aspartate 57 is part of the active site. ATP-binding residues include glutamate 242 and asparagine 269. Zn(2+)-binding residues include cysteine 281 and cysteine 284.

This sequence belongs to the arsA ATPase family. As to quaternary structure, homodimer. Component of the Golgi to ER traffic (GET) complex, which is composed of GET1, GET2 and GET3. Within the complex, GET1 and GET2 form a heterotetramer which is stabilized by phosphatidylinositol binding and which binds to the GET3 homodimer. Interacts with the chloride channel protein GEF1.

It is found in the cytoplasm. Its subcellular location is the endoplasmic reticulum. The protein localises to the golgi apparatus. Its function is as follows. ATPase required for the post-translational delivery of tail-anchored (TA) proteins to the endoplasmic reticulum. Recognizes and selectively binds the transmembrane domain of TA proteins in the cytosol. This complex then targets to the endoplasmic reticulum by membrane-bound receptors GET1 and GET2, where the tail-anchored protein is released for insertion. This process is regulated by ATP binding and hydrolysis. ATP binding drives the homodimer towards the closed dimer state, facilitating recognition of newly synthesized TA membrane proteins. ATP hydrolysis is required for insertion. Subsequently, the homodimer reverts towards the open dimer state, lowering its affinity for the GET1-GET2 receptor, and returning it to the cytosol to initiate a new round of targeting. Cooperates with the HDEL receptor ERD2 to mediate the ATP-dependent retrieval of resident ER proteins that contain a C-terminal H-D-E-L retention signal from the Golgi to the ER. Involved in low-level resistance to the oxyanions arsenite and arsenate, and in heat tolerance. This chain is ATPase GET3, found in Lodderomyces elongisporus (strain ATCC 11503 / CBS 2605 / JCM 1781 / NBRC 1676 / NRRL YB-4239) (Yeast).